The primary structure comprises 456 residues: Bifunctional protein GlmU (456 aa).

The tract at residues 1-229 is pyrophosphorylase; it reads MLNNAMSVVI…LSEVEGVNNR (229 aa). Residues 11–14, Lys25, Gln76, 81–82, 103–105, Gly140, Glu154, Asn169, and Asn227 contribute to the UDP-N-acetyl-alpha-D-glucosamine site; these read LAAG, GT, and YGD. Mg(2+) is bound at residue Asp105. Asn227 serves as a coordination point for Mg(2+). The linker stretch occupies residues 230 to 250; that stretch reads LQLSRLERVYQSEQAEKLLLA. Positions 251 to 456 are N-acetyltransferase; it reads GVMLRDPARF…EGWRRPVKKK (206 aa). Residues Arg333 and Lys351 each coordinate UDP-N-acetyl-alpha-D-glucosamine. Catalysis depends on His363, which acts as the Proton acceptor. The UDP-N-acetyl-alpha-D-glucosamine site is built by Tyr366 and Asn377. Residues Ala380, 386–387, Ser405, Ala423, and Arg440 each bind acetyl-CoA; that span reads NY.

In the N-terminal section; belongs to the N-acetylglucosamine-1-phosphate uridyltransferase family. The protein in the C-terminal section; belongs to the transferase hexapeptide repeat family. In terms of assembly, homotrimer. Requires Mg(2+) as cofactor.

The protein localises to the cytoplasm. The enzyme catalyses alpha-D-glucosamine 1-phosphate + acetyl-CoA = N-acetyl-alpha-D-glucosamine 1-phosphate + CoA + H(+). It carries out the reaction N-acetyl-alpha-D-glucosamine 1-phosphate + UTP + H(+) = UDP-N-acetyl-alpha-D-glucosamine + diphosphate. The protein operates within nucleotide-sugar biosynthesis; UDP-N-acetyl-alpha-D-glucosamine biosynthesis; N-acetyl-alpha-D-glucosamine 1-phosphate from alpha-D-glucosamine 6-phosphate (route II): step 2/2. Its pathway is nucleotide-sugar biosynthesis; UDP-N-acetyl-alpha-D-glucosamine biosynthesis; UDP-N-acetyl-alpha-D-glucosamine from N-acetyl-alpha-D-glucosamine 1-phosphate: step 1/1. It functions in the pathway bacterial outer membrane biogenesis; LPS lipid A biosynthesis. Catalyzes the last two sequential reactions in the de novo biosynthetic pathway for UDP-N-acetylglucosamine (UDP-GlcNAc). The C-terminal domain catalyzes the transfer of acetyl group from acetyl coenzyme A to glucosamine-1-phosphate (GlcN-1-P) to produce N-acetylglucosamine-1-phosphate (GlcNAc-1-P), which is converted into UDP-GlcNAc by the transfer of uridine 5-monophosphate (from uridine 5-triphosphate), a reaction catalyzed by the N-terminal domain. This Escherichia fergusonii (strain ATCC 35469 / DSM 13698 / CCUG 18766 / IAM 14443 / JCM 21226 / LMG 7866 / NBRC 102419 / NCTC 12128 / CDC 0568-73) protein is Bifunctional protein GlmU.